The chain runs to 295 residues: Ribosomal protein L11 methyltransferase (295 aa).

Thr-150, Gly-171, Asp-193, and Asn-232 together coordinate S-adenosyl-L-methionine.

This sequence belongs to the methyltransferase superfamily. PrmA family.

Its subcellular location is the cytoplasm. It carries out the reaction L-lysyl-[protein] + 3 S-adenosyl-L-methionine = N(6),N(6),N(6)-trimethyl-L-lysyl-[protein] + 3 S-adenosyl-L-homocysteine + 3 H(+). Functionally, methylates ribosomal protein L11. The chain is Ribosomal protein L11 methyltransferase from Neisseria meningitidis serogroup C / serotype 2a (strain ATCC 700532 / DSM 15464 / FAM18).